We begin with the raw amino-acid sequence, 1049 residues long: Dyslexia-associated protein KIAA0319-like protein (1049 aa).

Over 1–29 (MEKRLGVKPNPASWILSGYYWQTSAKWLR) the chain is Cytoplasmic. Residues 30–50 (SLYLFYTCFCFSVLWLSTDAS) form a helical membrane-spanning segment. The 79-residue stretch at 49-127 (ASESRCQQGK…AFRTHSSNSM (79 aa)) folds into the MANSC domain. Residues 51–932 (ESRCQQGKTQ…DSNCEWSVLY (882 aa)) are Extracellular-facing. 5 N-linked (GlcNAc...) asparagine glycosylation sites follow: Asn247, Asn395, Asn472, Asn487, and Asn525. 5 PKD domains span residues 312–401 (SAGE…VKPE), 409–498 (IAIV…VNKA), 504–594 (VANA…VQPE), 600–688 (QADA…VKEE), and 694–785 (IAKI…VKPD). A helical membrane pass occupies residues 933–953 (VIIATFVIVVALGILSWTVIC). At 954-1049 (CCKRQKGKPK…KARSPREEIL (96 aa)) the chain is on the cytoplasmic side. The residue at position 974 (Thr974) is a Phosphothreonine. Phosphoserine occurs at positions 978, 1009, and 1031. The interval 1022–1049 (GKLLHGQNGSVPNGQTPLKARSPREEIL) is disordered. Polar residues predominate over residues 1028–1037 (QNGSVPNGQT). At Thr1037 the chain carries Phosphothreonine.

In terms of assembly, interacts with RTN4R. (Microbial infection) Interacts with AAV-2 VP1. N-glycosylated. Expressed in cortical neurons in the brain cortex (at protein level).

The protein resides in the cytoplasmic granule membrane. It is found in the golgi apparatus membrane. It localises to the golgi apparatus. Its subcellular location is the trans-Golgi network membrane. The protein localises to the cell membrane. Its function is as follows. Possible role in axon guidance through interaction with RTN4R. In terms of biological role, (Microbial infection) Acts as a receptor for adeno-associated virus and is involved in adeno-associated virus infection through endocytosis system. The protein is Dyslexia-associated protein KIAA0319-like protein of Homo sapiens (Human).